The primary structure comprises 329 residues: MVNILKKLANGVSLNIDEAYLLSREILSGGLNDVAVAAALTAMRCRGETAEEVTGFVKSAREVAVKVPLRVEAIDTAGTGGDGAGTINLSTLAAVVAAAAGARVLKHGNRSASGFFGSADFMEAVGYNLEVGPEKAAEMVEKIGFAFVFAPRYHPAFAKVAPVRRQLPFRTVFNIVGPLANPGLVKRQLIGVSERRLLDVVGGVASVLLDRALVVYGSGVDEVSTEGPTEVVEVRGGRAERYVLEPEDFGIGKTPLPRASTREEAVGLALAGLRGEHREAEIAIAVNAAAALYVAEVVRDFRDGFELAVKTIREGAAYRKLREAVEASR.

Residues glycine 78, glycine 81–aspartate 82, threonine 86, asparagine 88–threonine 91, lysine 106–glycine 114, and serine 118 contribute to the 5-phospho-alpha-D-ribose 1-diphosphate site. An anthranilate-binding site is contributed by glycine 78. Serine 90 provides a ligand contact to Mg(2+). Residue asparagine 109 participates in anthranilate binding. Arginine 164 serves as a coordination point for anthranilate. Positions 221 and 222 each coordinate Mg(2+).

The protein belongs to the anthranilate phosphoribosyltransferase family. Homodimer. Mg(2+) serves as cofactor.

It carries out the reaction N-(5-phospho-beta-D-ribosyl)anthranilate + diphosphate = 5-phospho-alpha-D-ribose 1-diphosphate + anthranilate. It participates in amino-acid biosynthesis; L-tryptophan biosynthesis; L-tryptophan from chorismate: step 2/5. In terms of biological role, catalyzes the transfer of the phosphoribosyl group of 5-phosphorylribose-1-pyrophosphate (PRPP) to anthranilate to yield N-(5'-phosphoribosyl)-anthranilate (PRA). The sequence is that of Anthranilate phosphoribosyltransferase from Pyrobaculum islandicum (strain DSM 4184 / JCM 9189 / GEO3).